A 386-amino-acid polypeptide reads, in one-letter code: Peroxisomal membrane protein PEX13 (386 aa).

The segment at 1–76 is disordered; the sequence is MSSTAVPRPK…SSGTYGESNT (76 aa). The Lumenal portion of the chain corresponds to 1–263; sequence MSSTAVPRPK…KATRRKISWK (263 aa). Residues 23–39 show a composition bias toward polar residues; that stretch reads RNAQSLSAMMTSNQQDS. The span at 44-55 shows a compositional bias: low complexity; sequence ESNNSNSASESA. Over residues 65–76 the composition is skewed to polar residues; that stretch reads LNSSGTYGESNT. Residues 264-280 traverse the membrane as a helical segment; sequence PLLFFLMAVFGFPYLLN. Topologically, residues 281-386 are cytoplasmic; that stretch reads KFITKLQTSG…EHVDDETRTH (106 aa). The SH3 domain occupies 306-372; that stretch reads SKLEFARALY…PYNYIEIIKR (67 aa).

Belongs to the peroxin-13 family. In terms of assembly, interacts (via SH3 domain) with PEX14 (via SH3-binding motif); forming the PEX13-PEX14 docking complex.

The protein resides in the peroxisome membrane. Component of the PEX13-PEX14 docking complex, a translocon channel that specifically mediates the import of peroxisomal cargo proteins bound to PEX5 or PEX21 receptors. The PEX13-PEX14 docking complex forms a large import pore which can be opened to a diameter of about 9 nm. Mechanistically, PEX5 (or PEX21) receptor along with cargo proteins associates with the PEX14 subunit of the PEX13-PEX14 docking complex in the cytosol, leading to the insertion of the receptor into the organelle membrane with the concomitant translocation of the cargo into the peroxisome matrix. This chain is Peroxisomal membrane protein PEX13, found in Saccharomyces cerevisiae (strain ATCC 204508 / S288c) (Baker's yeast).